Reading from the N-terminus, the 431-residue chain is C2H2 type master regulator of conidiophore development brlA (431 aa).

Disordered regions lie at residues 29–51 (MTSS…SHGS), 211–275 (TPQQ…SEEY), and 287–306 (IRTH…VRSN). A compositionally biased stretch (low complexity) spans 30 to 48 (TSSFSPLESPTPTPTSLYS). Positions 225–265 (PSSNYSDFPASLQTFKPHTPSTPVRSLSLGTPRSDTPQSRM) are enriched in polar residues. The segment covering 287–302 (IRTHRQPSRKPSKKQL) has biased composition (basic residues). 2 C2H2-type zinc fingers span residues 321-345 (FKCK…MKSH) and 351-376 (HVCW…TKTH). The segment at 390–412 (DETSPDYDPEFRGQLTPDGRPIY) is disordered.

The protein resides in the nucleus. In terms of biological role, brlA, abaA and wetA are pivotal regulators of conidiophore development and conidium maturation. They act individually and together to regulate their own expression and that of numerous other sporulation-specific genes. Binds promoters of target genes at brlA response elements (BREs) containing the conserved sequence 5'-(C/A)(A/G)AGGG(G/A)-3'. Regulates the expression levels of seven secondary metabolism gene clusters including a down-regulated cluster putatively involved in the biosynthesis of the mycotoxins roquefortine C and meleagrin. Negatively regulates the expression of cellulase genes. This chain is C2H2 type master regulator of conidiophore development brlA, found in Penicillium oxalicum (strain 114-2 / CGMCC 5302) (Penicillium decumbens).